Reading from the N-terminus, the 99-residue chain is Protein dpy-30 homolog (99 aa).

The residue at position 1 (Met-1) is an N-acetylmethionine. Residues 1–26 are disordered; it reads MEPEQMLEGQTQVAENPHSEYGLTDN. Ser-19 carries the post-translational modification Phosphoserine. Residue Lys-35 is modified to N6-acetyllysine; alternate. A Glycyl lysine isopeptide (Lys-Gly) (interchain with G-Cter in SUMO2); alternate cross-link involves residue Lys-35.

Belongs to the dpy-30 family. As to quaternary structure, homodimer. Core component of several methyltransferase-containing complexes including MLL1/MLL, MLL2/3 (also named ASCOM complex) and MLL4/WBP7. Each complex is at least composed of ASH2L, RBBP5, WDR5, DPY30, one or more specific histone methyltransferases (KMT2A/MLL1, KMT2D/MLL2, KMT2C/MLL3 and KMT2B/MLL4), and the facultative components MEN1, HCFC1, HCFC2, NCOA6, KDM6A, PAXIP1/PTIP, PAGR1 and alpha- and beta-tubulin. Interacts with ASH2L; the interaction is direct. Interacts with ARFGEF1. Component of the SET1 complex, at least composed of the catalytic subunit (SETD1A or SETD1B), WDR5, WDR82, RBBP5, ASH2L/ASH2, CXXC1/CFP1, HCFC1 and DPY30.

The protein localises to the nucleus. The protein resides in the golgi apparatus. Its subcellular location is the trans-Golgi network. Functionally, as part of the MLL1/MLL complex, involved in the methylation of histone H3 at 'Lys-4', particularly trimethylation. Histone H3 'Lys-4' methylation represents a specific tag for epigenetic transcriptional activation. May play some role in histone H3 acetylation. In embryonic stem cells, may play a crucial role in retinoic acid-induced differentiation along the neural lineage, regulating gene induction and H3 'Lys-4' methylation at key developmental loci. May also play an indirect or direct role in endosomal transport. The protein is Protein dpy-30 homolog (DPY30) of Bos taurus (Bovine).